The chain runs to 532 residues: Vesicular acetylcholine transporter (532 aa).

Residues 1–33 (MESAEPAGQARAAATKLSEAVGAALQEPRRQRR) are Cytoplasmic-facing. The helical transmembrane segment at 34 to 54 (LVLVIVCVALLLDNMLYMVIV) threads the bilayer. The Lumenal, vesicle segment spans residues 55–125 (PIVPDYIAHM…PTESEDVKIG (71 aa)). N89 and N96 each carry an N-linked (GlcNAc...) asparagine glycan. A helical transmembrane segment spans residues 126-146 (VLFASKAILQLLVNPLSGPFI). Over 147 to 152 (DRMSYD) the chain is Cytoplasmic. Residues 153–173 (VPLLIGLGVMFASTVLFAFAE) form a helical membrane-spanning segment. Topologically, residues 174–182 (DYATLFAAR) are lumenal, vesicle. The helical transmembrane segment at 183–203 (SLQGLGSAFADTSGIAMIADK) threads the bilayer. The Cytoplasmic portion of the chain corresponds to 204-213 (YPEEPERSRA). Residues 214 to 234 (LGVALAFISFGSLVAPPFGGI) traverse the membrane as a helical segment. Residues 235–242 (LYEFAGKR) are Lumenal, vesicle-facing. Residues 243–263 (VPFLVLAAVSLFDALLLLAVA) traverse the membrane as a helical segment. The Cytoplasmic segment spans residues 264 to 289 (KPFSAAARARANLPVGTPIHRLMLDP). The chain crosses the membrane as a helical span at residues 290–310 (YIAVVAGALTTCNIPLAFLEP). The Lumenal, vesicle portion of the chain corresponds to 311–325 (TIATWMKHTMAASEW). Residues 326–346 (EMGMAWLPAFVPHVLGVYLTV) traverse the membrane as a helical segment. The Cytoplasmic portion of the chain corresponds to 347 to 356 (RLAARYPHLQ). Residues 357–377 (WLYGALGLAVIGASSCIVPAC) form a helical membrane-spanning segment. Topologically, residues 378 to 388 (RSFAPLVVSLC) are lumenal, vesicle. A helical transmembrane segment spans residues 389–409 (GLCFGIALVDTALLPTLAFLV). Topologically, residues 410–422 (DVRHVSVYGSVYA) are cytoplasmic. The helical transmembrane segment at 423–443 (IADISYSVAYALGPIVAGHIV) threads the bilayer. At 444 to 447 (HSLG) the chain is on the lumenal, vesicle side. The chain crosses the membrane as a helical span at residues 448–468 (FEQLSLGMGLANLLYAPVLLL). At 469–532 (LRNVGLLTRS…DDYNYYYTRS (64 aa)) the chain is on the cytoplasmic side. Residues 471–532 (NVGLLTRSRS…DDYNYYYTRS (62 aa)) are mediates interaction with SEC14L1. Residues 502-523 (RPVSGQDGEPRSPPGPFDACED) form a disordered region.

It belongs to the major facilitator superfamily. Vesicular transporter family. In terms of assembly, interacts with SEC14L1. In terms of tissue distribution, peripheral and central cholinergic nervous systems.

The protein localises to the cytoplasmic vesicle. The protein resides in the secretory vesicle. It localises to the synaptic vesicle membrane. The enzyme catalyses acetylcholine(out) + 2 H(+)(in) = acetylcholine(in) + 2 H(+)(out). It carries out the reaction choline(in) + 2 H(+)(out) = choline(out) + 2 H(+)(in). It catalyses the reaction serotonin(in) + 2 H(+)(out) = serotonin(out) + 2 H(+)(in). Potently inhibited by L-vesamicol, reserpine and tetrabenazine. Functionally, electrogenic antiporter that exchanges one cholinergic neurotransmitter, acetylcholine or choline, with two intravesicular protons across the membrane of synaptic vesicles. Uses the electrochemical proton gradient established by the V-type proton-pump ATPase to store neurotransmitters inside the vesicles prior to their release via exocytosis. Determines cholinergic vesicular quantal size at presynaptic nerve terminals in developing neuro-muscular junctions with an impact on motor neuron differentiation and innervation pattern. Part of forebrain cholinergic system, regulates hippocampal synapse transmissions that underlie spatial memory formation. Can transport serotonin. The chain is Vesicular acetylcholine transporter (SLC18A3) from Homo sapiens (Human).